A 1139-amino-acid chain; its full sequence is Exportin-T (1139 aa).

The tract at residues 562-589 (ARNKLRAAQGSGRTTPSSSDNVDLGPSS) is disordered. Positions 572–589 (SGRTTPSSSDNVDLGPSS) are enriched in polar residues.

It belongs to the exportin family.

It localises to the nucleus. The protein localises to the cytoplasm. TRNA nucleus export receptor which facilitates tRNA translocation across the nuclear pore complex. Involved in pre-tRNA splicing, probably by affecting the interaction of pre-tRNA with splicing endonuclease. The polypeptide is Exportin-T (LOS1) (Cryptococcus neoformans var. neoformans serotype D (strain B-3501A) (Filobasidiella neoformans)).